Reading from the N-terminus, the 293-residue chain is Elongation factor Ts (293 aa).

The segment at 79–82 (TDFV) is involved in Mg(2+) ion dislocation from EF-Tu.

Belongs to the EF-Ts family.

It is found in the cytoplasm. Functionally, associates with the EF-Tu.GDP complex and induces the exchange of GDP to GTP. It remains bound to the aminoacyl-tRNA.EF-Tu.GTP complex up to the GTP hydrolysis stage on the ribosome. This is Elongation factor Ts (tsf) from Halalkalibacterium halodurans (strain ATCC BAA-125 / DSM 18197 / FERM 7344 / JCM 9153 / C-125) (Bacillus halodurans).